We begin with the raw amino-acid sequence, 138 residues long: Venom allergen 2 (138 aa).

Residues 1–19 (MKSFVLATCLLGFAQIIYA) form the signal peptide. Intrachain disulfides connect C34-C57, C81-C94, and C101-C122.

It belongs to the ant venom allergen 2/4 family. As to quaternary structure, homodimer; disulfide-linked. As to expression, expressed by the venom gland.

It is found in the secreted. The protein is Venom allergen 2 of Solenopsis invicta (Red imported fire ant).